Here is a 455-residue protein sequence, read N- to C-terminus: Ribulose bisphosphate carboxylase large chain (455 aa).

Residue lysine 5 is modified to N6,N6,N6-trimethyllysine. Substrate is bound by residues asparagine 114 and threonine 164. Lysine 166 serves as the catalytic Proton acceptor. Residue lysine 168 coordinates substrate. Positions 192, 194, and 195 each coordinate Mg(2+). An N6-carboxylysine modification is found at lysine 192. The active-site Proton acceptor is the histidine 285. Residues arginine 286, histidine 318, and serine 370 each contribute to the substrate site.

Belongs to the RuBisCO large chain family. Type I subfamily. Heterohexadecamer of 8 large chains and 8 small chains; disulfide-linked. The disulfide link is formed within the large subunit homodimers. Mg(2+) serves as cofactor. Post-translationally, the disulfide bond which can form in the large chain dimeric partners within the hexadecamer appears to be associated with oxidative stress and protein turnover.

It localises to the plastid. Its subcellular location is the chloroplast. The catalysed reaction is 2 (2R)-3-phosphoglycerate + 2 H(+) = D-ribulose 1,5-bisphosphate + CO2 + H2O. It carries out the reaction D-ribulose 1,5-bisphosphate + O2 = 2-phosphoglycolate + (2R)-3-phosphoglycerate + 2 H(+). Its function is as follows. RuBisCO catalyzes two reactions: the carboxylation of D-ribulose 1,5-bisphosphate, the primary event in carbon dioxide fixation, as well as the oxidative fragmentation of the pentose substrate in the photorespiration process. Both reactions occur simultaneously and in competition at the same active site. The polypeptide is Ribulose bisphosphate carboxylase large chain (Lupinus cosentinii (West Australian blue lupine)).